Here is a 681-residue protein sequence, read N- to C-terminus: Type VI secretion system spike protein VgrG1 (681 aa).

Residues 621-640 (NSGGSPSSGSGWGGKSPVDP) are disordered.

The protein belongs to the VgrG protein family.

The protein resides in the secreted. The catalysed reaction is L-arginyl-[protein] + NAD(+) = N(omega)-(ADP-D-ribosyl)-L-arginyl-[protein] + nicotinamide + H(+). In terms of biological role, part of the type VI secretion system specialized secretion system, which delivers several virulence factors in both prokaryotic and eukaryotic cells during infection. Acts directly as an secreted effector with an actin ADP-ribosyltransferase activity that disrupts the host actin cytoskeleton, leading to a decrease in host cell viability and an increase in apoptosis. In Aeromonas hydrophila, this protein is Type VI secretion system spike protein VgrG1 (vgrG1).